The chain runs to 516 residues: Nucleolar complex protein 4 homolog (516 aa).

3 helical membrane-spanning segments follow: residues 297 to 317, 347 to 367, and 375 to 395; these read ACDLGGALSLLALNGLFILIH, FFHLADLFLSSSHLPAYLVAA, and LALTAPPEALLMVLPFICNLL.

The protein belongs to the CBF/MAK21 family.

It localises to the nucleus membrane. The protein localises to the nucleus. It is found in the nucleolus. In Homo sapiens (Human), this protein is Nucleolar complex protein 4 homolog (NOC4L).